The chain runs to 364 residues: Mannitol-1-phosphate 5-dehydrogenase (364 aa).

An NAD(+)-binding site is contributed by 6–17 (VLHFGAGNIGRG).

The protein belongs to the mannitol dehydrogenase family.

The enzyme catalyses D-mannitol 1-phosphate + NAD(+) = beta-D-fructose 6-phosphate + NADH + H(+). This is Mannitol-1-phosphate 5-dehydrogenase (mtlD) from Mycoplasma pneumoniae (strain ATCC 29342 / M129 / Subtype 1) (Mycoplasmoides pneumoniae).